The following is a 360-amino-acid chain: MTKRLLILEDGTIFEGEPFGADIDVTGEIVFNTGMTGYQESITDQSYNGQILTFTYPLIGNYGINRDDYESISPTCKGVVVSEVSRLASNWRKQMTLDAFLKIKGIPGISGIDTRALTKIIRQHGTMKATMADDGDSIQHLKDQLRATVLPTNTIEQVSTKTAYPAPGIGKNIVLVDFGLKHSILREFSKRQCNITVVPFNITAEEVLQLNPDGLMLSNGPGNPEDLPEALDMIRGVQGKIPIFGICMGHQLFSLANGAKTCKMTFGHRGFNHAVREIATGRIDFTSQNHGYAVERSSLPDTLMVTHEDINDKTVEGVKHRDFPAFSVQFHPDAAPGPHDASYLFDEFLEMIDSWRCTSK.

Positions 1–169 (MTKRLLILED…TKTAYPAPGI (169 aa)) are CPSase. The L-glutamine site is built by S46, G220, and G222. In terms of domain architecture, Glutamine amidotransferase type-1 spans 172–358 (NIVLVDFGLK…LEMIDSWRCT (187 aa)). The active-site Nucleophile is C247. The L-glutamine site is built by M248, Q251, N289, G291, and Y292. Residues H331 and D333 contribute to the active site.

This sequence belongs to the CarA family. Composed of two chains; the small (or glutamine) chain promotes the hydrolysis of glutamine to ammonia, which is used by the large (or ammonia) chain to synthesize carbamoyl phosphate. Tetramer of heterodimers (alpha,beta)4.

It catalyses the reaction hydrogencarbonate + L-glutamine + 2 ATP + H2O = carbamoyl phosphate + L-glutamate + 2 ADP + phosphate + 2 H(+). It carries out the reaction L-glutamine + H2O = L-glutamate + NH4(+). It participates in amino-acid biosynthesis; L-arginine biosynthesis; carbamoyl phosphate from bicarbonate: step 1/1. Its pathway is pyrimidine metabolism; UMP biosynthesis via de novo pathway; (S)-dihydroorotate from bicarbonate: step 1/3. Functionally, small subunit of the glutamine-dependent carbamoyl phosphate synthetase (CPSase). CPSase catalyzes the formation of carbamoyl phosphate from the ammonia moiety of glutamine, carbonate, and phosphate donated by ATP, constituting the first step of 2 biosynthetic pathways, one leading to arginine and/or urea and the other to pyrimidine nucleotides. The small subunit (glutamine amidotransferase) binds and cleaves glutamine to supply the large subunit with the substrate ammonia. This Streptococcus pyogenes serotype M3 (strain SSI-1) protein is Carbamoyl phosphate synthase small chain.